The chain runs to 173 residues: ATP synthase subunit b (173 aa).

Residues 15–35 (GVEWGTVIVQVLTFIVLLALL) traverse the membrane as a helical segment.

The protein belongs to the ATPase B chain family. In terms of assembly, F-type ATPases have 2 components, F(1) - the catalytic core - and F(0) - the membrane proton channel. F(1) has five subunits: alpha(3), beta(3), gamma(1), delta(1), epsilon(1). F(0) has three main subunits: a(1), b(2) and c(10-14). The alpha and beta chains form an alternating ring which encloses part of the gamma chain. F(1) is attached to F(0) by a central stalk formed by the gamma and epsilon chains, while a peripheral stalk is formed by the delta and b chains.

The protein localises to the cell membrane. In terms of biological role, f(1)F(0) ATP synthase produces ATP from ADP in the presence of a proton or sodium gradient. F-type ATPases consist of two structural domains, F(1) containing the extramembraneous catalytic core and F(0) containing the membrane proton channel, linked together by a central stalk and a peripheral stalk. During catalysis, ATP synthesis in the catalytic domain of F(1) is coupled via a rotary mechanism of the central stalk subunits to proton translocation. Component of the F(0) channel, it forms part of the peripheral stalk, linking F(1) to F(0). This chain is ATP synthase subunit b, found in Staphylococcus aureus (strain MSSA476).